The chain runs to 530 residues: Testis-expressed protein 44 (530 aa).

Positions 1-10 (MTAEPLEDPE) are enriched in acidic residues. Disordered stretches follow at residues 1–85 (MTAE…FIRT), 207–233 (ATSA…TSLL), 256–290 (ENNR…QPVL), and 305–384 (QTSV…SPDF). 3 stretches are compositionally biased toward polar residues: residues 11–26 (ASSS…SSDN), 222–233 (GQDNPEETTSLL), and 257–280 (NNRT…TLGN). The segment covering 365–381 (PPDPPDPGSPGGSPPHS) has biased composition (pro residues). Phosphoserine is present on S468.

Its subcellular location is the cytoplasm. The sequence is that of Testis-expressed protein 44 (Tex44) from Mus musculus (Mouse).